Here is a 302-residue protein sequence, read N- to C-terminus: Nudix hydrolase 5 (302 aa).

Residues 122 to 254 enclose the Nudix hydrolase domain; that stretch reads SHRIGIGAFV…EGNEMFKLIA (133 aa). The Nudix box motif lies at 159 to 180; sequence GTIKEGESIWAGAVREVKEETD. Mg(2+) is bound by residues Glu-174 and Glu-178.

This sequence belongs to the Nudix hydrolase family. It depends on Mg(2+) as a cofactor. Requires Mn(2+) as cofactor. In terms of tissue distribution, expressed in roots, stems and leaves.

Its function is as follows. Probably mediates the hydrolysis of some nucleoside diphosphate derivatives. In Arabidopsis thaliana (Mouse-ear cress), this protein is Nudix hydrolase 5 (NUDT5).